Consider the following 121-residue polypeptide: Large ribosomal subunit protein bL12 (121 aa).

The protein belongs to the bacterial ribosomal protein bL12 family. In terms of assembly, homodimer. Part of the ribosomal stalk of the 50S ribosomal subunit. Forms a multimeric L10(L12)X complex, where L10 forms an elongated spine to which 2 to 4 L12 dimers bind in a sequential fashion. Binds GTP-bound translation factors.

In terms of biological role, forms part of the ribosomal stalk which helps the ribosome interact with GTP-bound translation factors. Is thus essential for accurate translation. The polypeptide is Large ribosomal subunit protein bL12 (Salmonella agona (strain SL483)).